The chain runs to 156 residues: Tripartite terminase subunit 2 (156 aa).

Positions 1–37 (MYESENASEHHPELEDVFSENTGDSNPSMGSSDSTRS) are disordered. Residues 19–37 (SENTGDSNPSMGSSDSTRS) show a composition bias toward polar residues.

It belongs to the herpesviridae TRM2 protein family. Associates with TRM1 and TRM3 to form the tripartite terminase complex.

It is found in the host nucleus. In terms of biological role, component of the molecular motor that translocates viral genomic DNA in empty capsid during DNA packaging. Forms a tripartite terminase complex together with TRM1 and TRM3 in the host cytoplasm. Once the complex reaches the host nucleus, it interacts with the capsid portal vertex. This portal forms a ring in which genomic DNA is translocated into the capsid. This Varicella-zoster virus (strain Dumas) (HHV-3) protein is Tripartite terminase subunit 2.